We begin with the raw amino-acid sequence, 984 residues long: Lateral signaling target protein 2 homolog (984 aa).

4 disordered regions span residues proline 308 to glutamate 462, tyrosine 508 to serine 527, arginine 539 to serine 642, and aspartate 749 to alanine 900. 4 stretches are compositionally biased toward low complexity: residues threonine 326–threonine 356, asparagine 369–asparagine 380, threonine 387–alanine 404, and proline 412–tryptophan 433. The span at serine 434–glutamate 462 shows a compositional bias: acidic residues. Phosphoserine occurs at positions 544 and 545. The segment covering arginine 571–arginine 611 has biased composition (basic residues). Residues leucine 630 to serine 642 are compositionally biased toward low complexity. 2 stretches are compositionally biased toward polar residues: residues alanine 760–leucine 779 and serine 789–leucine 806. Serine 805 is modified (phosphoserine). Composition is skewed to low complexity over residues alanine 811–alanine 869 and proline 886–proline 899. Residues aspartate 904–valine 964 form an FYVE-type zinc finger. The Zn(2+) site is built by cysteine 910, cysteine 913, cysteine 926, cysteine 929, cysteine 934, cysteine 937, cysteine 956, and cysteine 959.

This sequence belongs to the lst-2 family.

Negative regulator of epidermal growth factor receptor (EGFR) signaling. The polypeptide is Lateral signaling target protein 2 homolog (Drosophila yakuba (Fruit fly)).